The sequence spans 276 residues: ADP-dependent (S)-NAD(P)H-hydrate dehydratase (276 aa).

The region spanning 7–274 is the YjeF C-terminal domain; the sequence is METLNSINIP…NEIPYAMKQL (268 aa). Ala-42, Gly-105, and His-154 together coordinate (6S)-NADPHX. Gly-216 provides a ligand contact to AMP. Asp-217 is a binding site for (6S)-NADPHX.

This sequence belongs to the NnrD/CARKD family. As to quaternary structure, homotetramer. Mg(2+) is required as a cofactor.

The enzyme catalyses (6S)-NADHX + ADP = AMP + phosphate + NADH + H(+). It catalyses the reaction (6S)-NADPHX + ADP = AMP + phosphate + NADPH + H(+). Its function is as follows. Catalyzes the dehydration of the S-form of NAD(P)HX at the expense of ADP, which is converted to AMP. Together with NAD(P)HX epimerase, which catalyzes the epimerization of the S- and R-forms, the enzyme allows the repair of both epimers of NAD(P)HX, a damaged form of NAD(P)H that is a result of enzymatic or heat-dependent hydration. This chain is ADP-dependent (S)-NAD(P)H-hydrate dehydratase, found in Staphylococcus aureus (strain NCTC 8325 / PS 47).